The sequence spans 114 residues: Hydrogenase maturation factor HypA (114 aa).

Residue His2 coordinates Ni(2+). Residues Cys74, Cys77, Cys90, and Cys93 each coordinate Zn(2+).

This sequence belongs to the HypA/HybF family.

Functionally, involved in the maturation of [NiFe] hydrogenases. Required for nickel insertion into the metal center of the hydrogenase. In Campylobacter jejuni subsp. jejuni serotype O:2 (strain ATCC 700819 / NCTC 11168), this protein is Hydrogenase maturation factor HypA.